The sequence spans 447 residues: Probable protein phosphatase 2C 71 (447 aa).

A PPM-type phosphatase domain is found at 33 to 279 (SYGYASSAGK…DNITCVVVRF (247 aa)). Mn(2+) is bound by residues D69, G70, D231, and D270. Low complexity predominate over residues 284–297 (SANNNGSSSSEEAN). Residues 284-447 (SANNNGSSSS…ARKTTPSIFN (164 aa)) are disordered. Residues 305-331 (NDSDHKISAKETNQDHTTVNKDLDRNT) show a composition bias toward basic and acidic residues. 2 stretches are compositionally biased toward polar residues: residues 346–374 (ADNSNQKPIATTATGHSVSSEQSGLTGEK) and 392–423 (KVPNQTQSTVHNDLDSSTAKKPAATEQSGSTG). The span at 424–438 (ERNRKPIKVHSDSAA) shows a compositional bias: basic and acidic residues.

It belongs to the PP2C family. Mg(2+) is required as a cofactor. The cofactor is Mn(2+).

The enzyme catalyses O-phospho-L-seryl-[protein] + H2O = L-seryl-[protein] + phosphate. It catalyses the reaction O-phospho-L-threonyl-[protein] + H2O = L-threonyl-[protein] + phosphate. This chain is Probable protein phosphatase 2C 71, found in Arabidopsis thaliana (Mouse-ear cress).